A 371-amino-acid polypeptide reads, in one-letter code: Conglutinin (371 aa).

A signal peptide spans 1-20 (MLLLPLSVLLLLTQPWRSLG). The Collagen-like domain occupies 46 to 216 (GLPGHDGQDG…TGAKGESGLA (171 aa)). Residues 47–215 (LPGHDGQDGR…ETGAKGESGL (169 aa)) are disordered. Positions 51 to 65 (DGQDGRECPHGEKGD) are enriched in basic and acidic residues. Lysine 63 carries the 5-hydroxylysine modification. Residues 71 to 83 (PAGRAGRPGWVGP) are compositionally biased toward low complexity. Proline 78 carries the 4-hydroxyproline modification. Residue lysine 87 is modified to 5-hydroxylysine. Proline 96 carries the post-translational modification 4-hydroxyproline. A 5-hydroxylysine modification is found at lysine 99. 4-hydroxyproline occurs at positions 108, 111, 129, and 132. Residues lysine 135 and lysine 141 each carry the 5-hydroxylysine modification. A compositionally biased stretch (gly residues) spans 139–148 (GPKGGVGAPG). Proline 147 and proline 153 each carry 4-hydroxyproline. 5-hydroxylysine occurs at positions 159 and 162. A 4-hydroxyproline mark is found at proline 171 and proline 195. Position 198 is a 5-hydroxylysine (lysine 198). The short motif at 201-203 (RGD) is the Cell attachment site element. The 99-residue stretch at 273-371 (QLCREAKGQL…SKQLLVICEF (99 aa)) folds into the C-type lectin domain. Cystine bridges form between cysteine 275–cysteine 369 and cysteine 347–cysteine 361. A glycan (N-linked (GlcNAc...) asparagine) is linked at asparagine 337.

The protein belongs to the SFTPD family. As to quaternary structure, oligomeric complex of 4 set of homotrimers. The hydroxylysines may be O-glycosylated.

Calcium-dependent lectin-like protein which binds to a yeast cell wall extract and immune complexes through the complement component (C3bi). It is capable of binding non-reducing terminal N-acetylglucosamine, mannose, and fucose residues. This Bos taurus (Bovine) protein is Conglutinin (CGN1).